Reading from the N-terminus, the 432-residue chain is Adenylosuccinate synthetase (432 aa).

Residues 13–19 (GDEGKGK) and 41–43 (GHT) contribute to the GTP site. Asp-14 serves as the catalytic Proton acceptor. The Mg(2+) site is built by Asp-14 and Gly-41. IMP contacts are provided by residues 14–17 (DEGK), 39–42 (NAGH), Thr-130, Arg-144, Gln-225, Thr-240, and Arg-304. His-42 (proton donor) is an active-site residue. Residue 300-306 (ATTGRRR) participates in substrate binding. Residues Arg-306, 332–334 (KLD), and 415–417 (STG) each bind GTP.

The protein belongs to the adenylosuccinate synthetase family. In terms of assembly, homodimer. Requires Mg(2+) as cofactor.

The protein resides in the cytoplasm. It catalyses the reaction IMP + L-aspartate + GTP = N(6)-(1,2-dicarboxyethyl)-AMP + GDP + phosphate + 2 H(+). The protein operates within purine metabolism; AMP biosynthesis via de novo pathway; AMP from IMP: step 1/2. Its function is as follows. Plays an important role in the de novo pathway of purine nucleotide biosynthesis. Catalyzes the first committed step in the biosynthesis of AMP from IMP. In Pectobacterium atrosepticum (strain SCRI 1043 / ATCC BAA-672) (Erwinia carotovora subsp. atroseptica), this protein is Adenylosuccinate synthetase.